Consider the following 340-residue polypeptide: Proline-rich transmembrane protein 2 (340 aa).

Residues 1 to 261 (MAASSSEISE…AGPGVEGGEG (261 aa)) form a disordered region. The Cytoplasmic portion of the chain corresponds to 1–268 (MAASSSEISE…GEGTQKPRDY (268 aa)). Residues 9–18 (SEMKGVEESP) show a composition bias toward basic and acidic residues. Ser28 is subject to Phosphoserine. Phosphothreonine is present on Thr74. Pro residues-rich tracts occupy residues 131–155 (PPEPAPEPAPQPDPRPDSQPTPKPA) and 197–207 (APEPHSPPSKK). Position 238 is a phosphoserine (Ser238). Arg240 bears the Omega-N-methylarginine mark. Residues Ser248 and Ser249 each carry the phosphoserine modification. Residues 269–289 (IILAILSCFCPMWPVNIVAFA) constitute an intramembrane region (helical). The Cytoplasmic portion of the chain corresponds to 290–317 (YAVMSRNSLQQGDVDGAQRLGRVAKLLS). A helical membrane pass occupies residues 318–338 (IVALVGGVLIIIASCVINLGV). Over 339-340 (YK) the chain is Extracellular.

It belongs to the CD225/Dispanin family. As to quaternary structure, component of the outer core of AMPAR complex. AMPAR complex consists of an inner core made of 4 pore-forming GluA/GRIA proteins (GRIA1, GRIA2, GRIA3 and GRIA4) and 4 major auxiliary subunits arranged in a twofold symmetry. One of the two pairs of distinct binding sites is occupied either by CNIH2, CNIH3 or CACNG2, CACNG3. The other harbors CACNG2, CACNG3, CACNG4, CACNG8 or GSG1L. This inner core of AMPAR complex is complemented by outer core constituents binding directly to the GluA/GRIA proteins at sites distinct from the interaction sites of the inner core constituents. Outer core constituents include at least PRRT1, PRRT2, CKAMP44/SHISA9, FRRS1L and NRN1. The proteins of the inner and outer core serve as a platform for other, more peripherally associated AMPAR constituents. Alone or in combination, these auxiliary subunits control the gating and pharmacology of the AMPAR complex and profoundly impact their biogenesis and protein processing. Interacts with intersectin 1/ITSN1. Interacts with SNARE complex components, including SNAP25, STX1A, SYT1 and SYT2; this interaction may inhibit SNARE complex formation.

The protein resides in the cell membrane. The protein localises to the presynaptic cell membrane. Its subcellular location is the synapse. It localises to the cell projection. It is found in the axon. The protein resides in the cytoplasmic vesicle. The protein localises to the secretory vesicle. Its subcellular location is the synaptic vesicle membrane. It localises to the postsynaptic density membrane. It is found in the dendritic spine. Its function is as follows. As a component of the outer core of AMPAR complex, may be involved in synaptic transmission in the central nervous system. In hippocampal neurons, in presynaptic terminals, plays an important role in the final steps of neurotransmitter release, possibly by regulating Ca(2+)-sensing. In the cerebellum, may inhibit SNARE complex formation and down-regulate short-term facilitation. This is Proline-rich transmembrane protein 2 (PRRT2) from Homo sapiens (Human).